The sequence spans 569 residues: Beta-galactoside-specific lectin 3 (569 aa).

A signal peptide spans 1-33 (MNAVMDSRGAWVSCFLILGLVFGATVKAETKFS). Residue glutamate 198 is part of the active site. Intrachain disulfides connect cysteine 280–cysteine 311, cysteine 327–cysteine 346, and cysteine 370–cysteine 387. The propeptide at 288 to 307 (EVRYWPLVIRPVLENSGAVD) is connecting peptide. Positions 314–441 (SEPTVRIVGR…YSLGQGWLAG (128 aa)) constitute a Ricin B-type lectin 1 domain. 329-331 (DVR) contacts D-galactose. Asparagine 402 and asparagine 442 each carry an N-linked (GlcNAc...) asparagine glycan. The Ricin B-type lectin 2 domain maps to 445–568 (APREVTIYGF…GNPNQMWLPV (124 aa)). 2 cysteine pairs are disulfide-bonded: cysteine 458-cysteine 471 and cysteine 497-cysteine 514. Position 541–543 (541–543 (DVA)) interacts with D-galactose.

The protein belongs to the ribosome-inactivating protein family. Type 2 RIP subfamily. Disulfide-linked dimer of A and B chains.

The catalysed reaction is Endohydrolysis of the N-glycosidic bond at one specific adenosine on the 28S rRNA.. In terms of biological role, the A chain is responsible for inhibiting protein synthesis through the catalytic inactivation of 60S ribosomal subunits by removing adenine from position 4,324 of 28S rRNA. The B chain binds to cell receptors and probably facilitates the entry into the cell of the A chain; B chains are also responsible for cell agglutination (lectin activity). Inhibits growth of the human tumor cell line Molt4. The sequence is that of Beta-galactoside-specific lectin 3 from Viscum album (European mistletoe).